Here is a 622-residue protein sequence, read N- to C-terminus: Mitochondrial distribution and morphology protein 34 (622 aa).

The SMP-LTD domain occupies 1–195 (MAFNFNWSPL…LPAIIHRLSL (195 aa)). Disordered regions lie at residues 211–234 (QVTN…DPVD), 303–322 (PSGL…SHVA), 355–432 (SMGA…IRQP), 445–464 (ERNA…PASR), 482–546 (SLQQ…QTHL), and 581–622 (KMGG…AYRH). Over residues 214-225 (NPPLEGPGLDPL) the composition is skewed to low complexity. Residues 360-372 (RHSKAHARKRKKR) are compositionally biased toward basic residues. A compositionally biased stretch (basic and acidic residues) spans 373-384 (VVDLRRRPKNTD). Positions 388-404 (SVSGESEFTESTSAASV) are enriched in low complexity. Polar residues-rich tracts occupy residues 482–495 (SLQQ…SKSL) and 522–532 (NASNYTSSGDS). Low complexity-rich tracts occupy residues 533 to 543 (QQQQQQQQQHQ) and 592 to 601 (NNKNDNKNNN).

Belongs to the MDM34 family. In terms of assembly, component of the ER-mitochondria encounter structure (ERMES) or MDM complex, composed of MMM1, MDM10, MDM12 and MDM34.

The protein localises to the mitochondrion outer membrane. Functionally, component of the ERMES/MDM complex, which serves as a molecular tether to connect the endoplasmic reticulum (ER) and mitochondria. Components of this complex are involved in the control of mitochondrial shape and protein biogenesis, and function in nonvesicular lipid trafficking between the ER and mitochondria. MDM34 is required for the interaction of the ER-resident membrane protein MMM1 and the outer mitochondrial membrane-resident beta-barrel protein MDM10. This chain is Mitochondrial distribution and morphology protein 34, found in Ajellomyces capsulatus (strain G186AR / H82 / ATCC MYA-2454 / RMSCC 2432) (Darling's disease fungus).